We begin with the raw amino-acid sequence, 532 residues long: Nitrogenase molybdenum-iron protein alpha chain (532 aa).

Residues Cys62, Cys88, and Cys153 each coordinate [8Fe-7S] cluster. 2 residues coordinate [7Fe-Mo-9S-C-homocitryl] cluster: Cys271 and His489.

This sequence belongs to the NifD/NifK/NifE/NifN family. In terms of assembly, tetramer of two alpha and two beta chains. Forms complex with the iron protein (nitrogenase component 2). It depends on [8Fe-7S] cluster as a cofactor. The cofactor is [7Fe-Mo-9S-C-homocitryl] cluster.

It carries out the reaction N2 + 8 reduced [2Fe-2S]-[ferredoxin] + 16 ATP + 16 H2O = H2 + 8 oxidized [2Fe-2S]-[ferredoxin] + 2 NH4(+) + 16 ADP + 16 phosphate + 6 H(+). In terms of biological role, this molybdenum-iron protein is part of the nitrogenase complex that catalyzes the key enzymatic reactions in nitrogen fixation. The polypeptide is Nitrogenase molybdenum-iron protein alpha chain (nifD2) (Methanosarcina barkeri).